Consider the following 486-residue polypeptide: FAD-dependent oxidoreductase domain-containing protein 1 (486 aa).

A helical transmembrane segment spans residues 66-86; it reads VVVVGGGVLGLSVAYWLKQLE.

As to quaternary structure, associates with components of the mitochondrial respiratory chain complex I. FAD serves as cofactor.

It is found in the mitochondrion inner membrane. Required for the assembly of the mitochondrial membrane respiratory chain NADH dehydrogenase (Complex I). Involved in mid-late stages of complex I assembly. This is FAD-dependent oxidoreductase domain-containing protein 1 (FOXRED1) from Macaca fascicularis (Crab-eating macaque).